The chain runs to 488 residues: Adenylosuccinate synthetase 1, chloroplastic (488 aa).

A chloroplast-targeting transit peptide spans 1 to 47 (MSLSTVNHAAAAAAAAAGPGKSFSAAAPAAPSVRLPRTRAPAAAAVS). GTP contacts are provided by residues 75-81 (GDEGKGK) and 103-105 (GHT). The active-site Proton acceptor is Asp-76. Mg(2+) is bound by residues Asp-76 and Gly-103. Residues 76–79 (DEGK), 101–104 (NAGH), Thr-193, Arg-207, Gln-287, Thr-302, and Arg-366 each bind IMP. His-104 functions as the Proton donor in the catalytic mechanism. 362 to 368 (TTTGRPR) contacts substrate. Residues Arg-368, 394–396 (KLD), and 477–479 (GVG) each bind GTP.

Belongs to the adenylosuccinate synthetase family. As to quaternary structure, homodimer. Mg(2+) serves as cofactor.

The protein resides in the plastid. Its subcellular location is the chloroplast. The enzyme catalyses IMP + L-aspartate + GTP = N(6)-(1,2-dicarboxyethyl)-AMP + GDP + phosphate + 2 H(+). Its pathway is purine metabolism; AMP biosynthesis via de novo pathway; AMP from IMP: step 1/2. In terms of biological role, plays an important role in the de novo pathway and in the salvage pathway of purine nucleotide biosynthesis. Catalyzes the first committed step in the biosynthesis of AMP from IMP. This chain is Adenylosuccinate synthetase 1, chloroplastic, found in Oryza sativa subsp. japonica (Rice).